The sequence spans 398 residues: uncharacterized protein (398 aa).

A run of 6 helical transmembrane segments spans residues 37–57 (LVILTIVAFFWGLLGVIFVQF), 92–112 (IFNAIFWLTQILFNVPFFIFG), 122–142 (LLTLYFVAVSNLFGFFFSYIP), 186–206 (LFYGLIWGFLQAVFYSVILII), 228–248 (IGGILMLINTVSFIIGYVIGT), and 268–288 (FGVAFFLSPNLVFTLLMNIVL).

Its subcellular location is the cell membrane. This is an uncharacterized protein from Mycoplasma genitalium (strain ATCC 33530 / DSM 19775 / NCTC 10195 / G37) (Mycoplasmoides genitalium).